Consider the following 171-residue polypeptide: Early E1A protein (171 aa).

Positions 40 to 48 (PTLHDLFDV) are interaction with RB1 in competition with E2F1. A disordered region spans residues 67–96 (DTDSSASTEGDSGFSPLSTPPVSPIPPHPT). Residues 84 to 96 (STPPVSPIPPHPT) are compositionally biased toward pro residues. An LXCXE motif, interaction with host RB1 motif is present at residues 106–110 (LLCLE). A zinc finger spans residues 145 to 163 (CLRCAFYQEQDDNALCGLC). The Nuclear localization signal motif lies at 166 to 171 (KGPCRR).

This sequence belongs to the adenoviridae E1A protein family. In terms of assembly, interacts with host UBE2I; this interaction interferes with polySUMOylation. Interacts with host RB1; this interaction induces the aberrant dissociation of RB1-E2F1 complex thereby disrupting the activity of RB1 and activating E2F1-regulated genes. Interacts with host ATF7; the interaction enhances ATF7-mediated viral transactivation activity which requires the zinc binding domains of both proteins. Isoform early E1A 32 kDa protein and isoform early E1A 26 kDa protein interact (via N-terminus) with CUL1 and E3 ubiquitin ligase RBX1; these interactions inhibit RBX1-CUL1-dependent elongation reaction of ubiquitin chains and attenuate ubiquitination of SCF(FBXW7) target proteins. Interacts (via PXLXP motif) with host ZMYND11/BS69 (via MYND-type zinc finger); this interaction inhibits E1A mediated transactivation. Interacts with host EP300; this interaction stimulates the acetylation of RB1 by recruiting EP300 and RB1 into a multimeric-protein complex. Interacts with host CTBP1 and CTBP2; this interaction seems to potentiate viral replication. Interacts with host DCAF7. Interacts with host DYRK1A. Interacts with host KPNA4; this interaction allows E1A import into the host nucleus. Interacts with host EP400; this interaction stabilizes MYC. Interacts with host TBP protein; this interaction probably disrupts the TBP-TATA complex.

It is found in the host nucleus. In terms of biological role, plays a role in viral genome replication by driving entry of quiescent cells into the cell cycle. Stimulation of progression from G1 to S phase allows the virus to efficiently use the cellular DNA replicating machinery to achieve viral genome replication. E1A protein has both transforming and trans-activating activities. Induces the disassembly of the E2F1 transcription factor from RB1 by direct competition for the same binding site on RB1, with subsequent transcriptional activation of E2F1-regulated S-phase genes and of the E2 region of the adenoviral genome. Release of E2F1 leads to the ARF-mediated inhibition of MDM2 and causes TP53/p53 to accumulate because it is not targeted for degradation by MDM2-mediated ubiquitination anymore. This increase in TP53, in turn, would arrest the cell proliferation and direct its death but this effect is counteracted by the viral protein E1B-55K. Inactivation of the ability of RB1 to arrest the cell cycle is critical for cellular transformation, uncontrolled cellular growth and proliferation induced by viral infection. Interaction with RBX1 and CUL1 inhibits ubiquitination of the proteins targeted by SCF(FBXW7) ubiquitin ligase complex, and may be linked to unregulated host cell proliferation. The tumorigenesis-restraining activity of E1A may be related to the disruption of the host CtBP-CtIP complex through the CtBP binding motif. The protein is Early E1A protein of Canis lupus familiaris (Dog).